The primary structure comprises 706 residues: Fatty acid oxidation complex subunit alpha (706 aa).

Residues 1–188 (MEKTFSLSRR…KMGLVDDVVP (188 aa)) form an enoyl-CoA hydratase region. Residues 308–706 (RKVAKAVVLG…AMAAEGKTFY (399 aa)) form a 3-hydroxyacyl-CoA dehydrogenase region.

This sequence in the N-terminal section; belongs to the enoyl-CoA hydratase/isomerase family. In the central section; belongs to the 3-hydroxyacyl-CoA dehydrogenase family. As to quaternary structure, heterotetramer of two alpha chains (FadJ) and two beta chains (FadI).

It is found in the cytoplasm. The catalysed reaction is a (3S)-3-hydroxyacyl-CoA = a (2E)-enoyl-CoA + H2O. It carries out the reaction a 4-saturated-(3S)-3-hydroxyacyl-CoA = a (3E)-enoyl-CoA + H2O. It catalyses the reaction a (3S)-3-hydroxyacyl-CoA + NAD(+) = a 3-oxoacyl-CoA + NADH + H(+). The enzyme catalyses (3S)-3-hydroxybutanoyl-CoA = (3R)-3-hydroxybutanoyl-CoA. It functions in the pathway lipid metabolism; fatty acid beta-oxidation. Functionally, catalyzes the formation of a hydroxyacyl-CoA by addition of water on enoyl-CoA. Also exhibits 3-hydroxyacyl-CoA epimerase and 3-hydroxyacyl-CoA dehydrogenase activities. The chain is Fatty acid oxidation complex subunit alpha from Shewanella amazonensis (strain ATCC BAA-1098 / SB2B).